The sequence spans 99 residues: Acylphosphatase (99 aa).

An Acylphosphatase-like domain is found at 10–99; the sequence is RLTAFVHGHV…PRGVEGFTER (90 aa). Active-site residues include arginine 25 and asparagine 43.

It belongs to the acylphosphatase family.

The enzyme catalyses an acyl phosphate + H2O = a carboxylate + phosphate + H(+). This is Acylphosphatase (acyP) from Corynebacterium efficiens (strain DSM 44549 / YS-314 / AJ 12310 / JCM 11189 / NBRC 100395).